The sequence spans 189 residues: Leucine repeat adapter protein 25 (189 aa).

Ser28 bears the Phosphoserine mark. Residues 55–81 (LSRAARAPDGPRHAAGSANLGSAAGPR) are disordered. The span at 68-79 (AAGSANLGSAAG) shows a compositional bias: low complexity. The stretch at 86-114 (LDSALAALRKEMVGLRQLDMSLLCQLWGL) is one LRR repeat. The segment at 141 to 174 (DSSYPPDAGLSDDDEPPDASLPPDPPPLTVPQTH) is disordered. The segment covering 159–169 (ASLPPDPPPLT) has biased composition (pro residues). A Phosphoserine modification is found at Ser188.

This sequence belongs to the FAM89 family. Interacts with SKI. Interacts (via LRR repeat) with CDC42BPA (via AGC-kinase C-terminal domain) and CDC42BPB (via AGC-kinase C-terminal domain). Interacts (via LRR repeat) with LIMK1 (via LIM zinc-binding domains). Forms a tripartite complex with CDC42BPA, CDC42BPB and LIMK1.

It is found in the cytoplasm. Its subcellular location is the cell projection. The protein localises to the lamellipodium. Negatively regulates TGF-beta-induced signaling; in cooperation with SKI prevents the translocation of SMAD2 from the nucleus to the cytoplasm in response to TGF-beta. Acts as an adapter that mediates the specific recognition of LIMK1 by CDC42BPA and CDC42BPB in the lamellipodia. LRAP25-mediated CDC42BPA/CDC42BPB targeting to LIMK1 and the lamellipodium results in LIMK1 activation and the subsequent phosphorylation of CFL1 which is important for lamellipodial F-actin regulation. This chain is Leucine repeat adapter protein 25, found in Rattus norvegicus (Rat).